A 138-amino-acid polypeptide reads, in one-letter code: Single-stranded DNA-binding protein 4 (138 aa).

Positions 1-104 (MINNVVLIGR…VVADSFQILE (104 aa)) constitute an SSB domain. The disordered stretch occupies residues 107 to 138 (DNSTNQASMDDQLPPSFGNSQPMDISDDDLPF). Residues 133-138 (DDDLPF) carry the Important for interaction with partner proteins motif.

Homotetramer.

Plays an important role in DNA replication, recombination and repair. Binds to ssDNA and to an array of partner proteins to recruit them to their sites of action during DNA metabolism. The protein is Single-stranded DNA-binding protein 4 (ssb4) of Streptococcus agalactiae serotype V (strain ATCC BAA-611 / 2603 V/R).